We begin with the raw amino-acid sequence, 426 residues long: Enolase (426 aa).

Q162 contributes to the (2R)-2-phosphoglycerate binding site. The active-site Proton donor is E204. Residues D241, E284, and D311 each coordinate Mg(2+). Residues K336, R365, S366, and K387 each coordinate (2R)-2-phosphoglycerate. The active-site Proton acceptor is K336.

Belongs to the enolase family. Mg(2+) serves as cofactor.

The protein resides in the cytoplasm. It is found in the secreted. Its subcellular location is the cell surface. It catalyses the reaction (2R)-2-phosphoglycerate = phosphoenolpyruvate + H2O. It participates in carbohydrate degradation; glycolysis; pyruvate from D-glyceraldehyde 3-phosphate: step 4/5. Catalyzes the reversible conversion of 2-phosphoglycerate (2-PG) into phosphoenolpyruvate (PEP). It is essential for the degradation of carbohydrates via glycolysis. The protein is Enolase of Acidithiobacillus ferrooxidans (strain ATCC 23270 / DSM 14882 / CIP 104768 / NCIMB 8455) (Ferrobacillus ferrooxidans (strain ATCC 23270)).